Here is a 110-residue protein sequence, read N- to C-terminus: Large ribosomal subunit protein uL22 (110 aa).

This sequence belongs to the universal ribosomal protein uL22 family. Part of the 50S ribosomal subunit.

Functionally, this protein binds specifically to 23S rRNA; its binding is stimulated by other ribosomal proteins, e.g. L4, L17, and L20. It is important during the early stages of 50S assembly. It makes multiple contacts with different domains of the 23S rRNA in the assembled 50S subunit and ribosome. In terms of biological role, the globular domain of the protein is located near the polypeptide exit tunnel on the outside of the subunit, while an extended beta-hairpin is found that lines the wall of the exit tunnel in the center of the 70S ribosome. The chain is Large ribosomal subunit protein uL22 from Alkaliphilus metalliredigens (strain QYMF).